We begin with the raw amino-acid sequence, 254 residues long: Triosephosphate isomerase (254 aa).

9–11 (NWK) is a binding site for substrate. His96 serves as the catalytic Electrophile. The active-site Proton acceptor is Glu169. Substrate contacts are provided by residues Gly175, Ser215, and 236–237 (GG).

The protein belongs to the triosephosphate isomerase family. In terms of assembly, homodimer.

It localises to the cytoplasm. The enzyme catalyses D-glyceraldehyde 3-phosphate = dihydroxyacetone phosphate. The protein operates within carbohydrate biosynthesis; gluconeogenesis. It participates in carbohydrate degradation; glycolysis; D-glyceraldehyde 3-phosphate from glycerone phosphate: step 1/1. Its function is as follows. Involved in the gluconeogenesis. Catalyzes stereospecifically the conversion of dihydroxyacetone phosphate (DHAP) to D-glyceraldehyde-3-phosphate (G3P). This is Triosephosphate isomerase from Borrelia hermsii (strain HS1 / DAH).